We begin with the raw amino-acid sequence, 396 residues long: 1-deoxy-D-xylulose 5-phosphate reductoisomerase (396 aa).

Positions 10, 11, 12, 13, 36, 37, 38, and 124 each coordinate NADPH. A 1-deoxy-D-xylulose 5-phosphate-binding site is contributed by K125. E126 is an NADPH binding site. A Mn(2+)-binding site is contributed by D150. 1-deoxy-D-xylulose 5-phosphate contacts are provided by S151, E152, S186, and H209. E152 provides a ligand contact to Mn(2+). G215 contacts NADPH. S222, N227, K228, and E231 together coordinate 1-deoxy-D-xylulose 5-phosphate. E231 is a binding site for Mn(2+).

Belongs to the DXR family. Mg(2+) is required as a cofactor. Requires Mn(2+) as cofactor.

It carries out the reaction 2-C-methyl-D-erythritol 4-phosphate + NADP(+) = 1-deoxy-D-xylulose 5-phosphate + NADPH + H(+). It functions in the pathway isoprenoid biosynthesis; isopentenyl diphosphate biosynthesis via DXP pathway; isopentenyl diphosphate from 1-deoxy-D-xylulose 5-phosphate: step 1/6. Catalyzes the NADPH-dependent rearrangement and reduction of 1-deoxy-D-xylulose-5-phosphate (DXP) to 2-C-methyl-D-erythritol 4-phosphate (MEP). In Glaesserella parasuis serovar 5 (strain SH0165) (Haemophilus parasuis), this protein is 1-deoxy-D-xylulose 5-phosphate reductoisomerase.